We begin with the raw amino-acid sequence, 298 residues long: Protoheme IX farnesyltransferase (298 aa).

9 consecutive transmembrane segments (helical) span residues 16–36, 45–65, 93–113, 114–134, 141–161, 172–192, 218–238, 241–261, and 277–297; these read VVALIVFTALVGMFLAIPDMP, ALGFLGIWLAASAAAAINQLL, VFAGVLIVISMTILVVWVNVI, TAVLTFASLIGYAVIYTVYLK, IVIGGLAGATPPMLGWAAVTG, SLLVLIIFIWTPPHFWALAIF, ILVYTVLLAIVTLAPVAVGMS, FYLGGAAVLNAVFLWYAWRML, and IVYLMALFAFLMVDHLLLPWV.

Belongs to the UbiA prenyltransferase family. Protoheme IX farnesyltransferase subfamily.

The protein localises to the cell inner membrane. It carries out the reaction heme b + (2E,6E)-farnesyl diphosphate + H2O = Fe(II)-heme o + diphosphate. The protein operates within porphyrin-containing compound metabolism; heme O biosynthesis; heme O from protoheme: step 1/1. Converts heme B (protoheme IX) to heme O by substitution of the vinyl group on carbon 2 of heme B porphyrin ring with a hydroxyethyl farnesyl side group. The protein is Protoheme IX farnesyltransferase of Xanthomonas axonopodis pv. citri (strain 306).